A 184-amino-acid chain; its full sequence is MGIEEKLPSGFLLTTVEGLAGYVRKGSLWPASFGLACCAIEMMATAGGRFDIARFGMEAFRASPRQADLMIVAGRVSQKMAPVLRQIYDQMVEPKWVLAMGVCASSGGMFNNYAIVQGVDHIVPVDIYLPGCPPRPEMLLNAILTLHEKIQQMPLGVHREEVARAAEQAALAATPTIQMKGLLR.

Positions 37, 38, 103, and 132 each coordinate [4Fe-4S] cluster.

The protein belongs to the complex I 20 kDa subunit family. NDH-1 is composed of 14 different subunits. Subunits NuoB, C, D, E, F, and G constitute the peripheral sector of the complex. [4Fe-4S] cluster serves as cofactor.

It is found in the cell membrane. It carries out the reaction a quinone + NADH + 5 H(+)(in) = a quinol + NAD(+) + 4 H(+)(out). Its function is as follows. NDH-1 shuttles electrons from NADH, via FMN and iron-sulfur (Fe-S) centers, to quinones in the respiratory chain. The immediate electron acceptor for the enzyme in this species is believed to be a menaquinone. Couples the redox reaction to proton translocation (for every two electrons transferred, four hydrogen ions are translocated across the cytoplasmic membrane), and thus conserves the redox energy in a proton gradient. The protein is NADH-quinone oxidoreductase subunit B of Rhodococcus jostii (strain RHA1).